The chain runs to 421 residues: MDLEAKVKKMGLGHEQGFGAPCLKCKEKCEGFELHFWRKICRNCKCGQEEHDVLLSNEEDRKVGKLFEDTKYTTLIAKLKTDGIPMYKRNVMILTNPVAAKKNVSINTVTYEWAPPVQNQALARQYMQMLPKEKQPVAGSEGAQYRKKQLAKQLPAHDQDPSKCHELSPKEVKEMEQFVKKYKSEALGVGDVKLPREMDTQGPNRMLLPGGDRSTTAAVGAMEGKSAEPKRTQYSCYCCKLSMKEGDPAIYAERAGYDKLWHPACFVCSACQELLVDMIYFWKNGKLYCGRHYCDSEKPRCAGCDELIFSNEYTQAENQNWHLKHFCCFDCDNILAGEIYVMVNDKPVCKPCYVKNHAVVCQGCHNAIDPEVQRVTYNNFSWHASTECFLCSCCSKCLIGQKFMPVEGMVFCSVECKKMMS.

A PET domain is found at Met-92–Asp-199. The interval Glu-133–Cys-164 is disordered. The span at Pro-155–Cys-164 shows a compositional bias: basic and acidic residues. 3 LIM zinc-binding domains span residues Tyr-234–Glu-297, Pro-299–Val-359, and Gln-362–Ser-421.

The protein belongs to the prickle / espinas / testin family. Interacts via LIM domain 1 with ZYX. Interacts (via LIM domain 3) with ENAH and VASP. Interacts with ALKBH4, talin, actin, alpha-actinin, GRIP1 and PXN. Interacts (via LIM domain 2) with ACTL7A (via N-terminus). Heterodimer with ACTL7A; the heterodimer interacts with ENAH to form a heterotrimer.

It is found in the cytoplasm. The protein resides in the cell junction. It localises to the focal adhesion. Its function is as follows. Scaffold protein that may play a role in cell adhesion, cell spreading and in the reorganization of the actin cytoskeleton. Plays a role in the regulation of cell proliferation. May act as a tumor suppressor. This chain is Testin (TES), found in Neofelis nebulosa (Clouded leopard).